Here is a 775-residue protein sequence, read N- to C-terminus: BLOC-2 complex member HPS6 (775 aa).

In terms of assembly, component of the biogenesis of lysosome-related organelles complex-2 (or BLOC2) composed of HPS3, HPS5 and HPS6. Interacts with HPS5 and HPS3. Interacts with biogenesis of lysosome-related organelles complex-1 (BLOC1). Interacts with AP-3 complex. Interacts with MNAT1. Interacts with DCTN1 and dynein intermediate chain. As to expression, ubiquitous.

The protein localises to the microsome membrane. It localises to the cytoplasm. Its subcellular location is the cytosol. It is found in the early endosome membrane. The protein resides in the lysosome membrane. Its function is as follows. May regulate the synthesis and function of lysosomes and of highly specialized organelles, such as melanosomes and platelet dense granules. Acts as a cargo adapter for the dynein-dynactin motor complex to mediate the transport of lysosomes from the cell periphery to the perinuclear region. Facilitates retrograde lysosomal trafficking by linking the motor complex to lysosomes, and perinuclear positioning of lysosomes is crucial for the delivery of endocytic cargos to lysosomes, for lysosome maturation and functioning. This chain is BLOC-2 complex member HPS6 (HPS6), found in Homo sapiens (Human).